The chain runs to 86 residues: Small ribosomal subunit protein uS15 (86 aa).

Belongs to the universal ribosomal protein uS15 family. As to quaternary structure, part of the 30S ribosomal subunit. Forms a bridge to the 50S subunit in the 70S ribosome, contacting the 23S rRNA.

Its function is as follows. One of the primary rRNA binding proteins, it binds directly to 16S rRNA where it helps nucleate assembly of the platform of the 30S subunit by binding and bridging several RNA helices of the 16S rRNA. Forms an intersubunit bridge (bridge B4) with the 23S rRNA of the 50S subunit in the ribosome. In Mycoplasma genitalium (strain ATCC 33530 / DSM 19775 / NCTC 10195 / G37) (Mycoplasmoides genitalium), this protein is Small ribosomal subunit protein uS15.